We begin with the raw amino-acid sequence, 445 residues long: tRNA-2-methylthio-N(6)-dimethylallyladenosine synthase (445 aa).

The MTTase N-terminal domain maps to 3–124 (KKLYIKTYGC…LPELISKVVR (122 aa)). [4Fe-4S] cluster contacts are provided by cysteine 12, cysteine 48, cysteine 87, cysteine 162, cysteine 166, and cysteine 169. The Radical SAM core domain maps to 148–380 (YPQGTSAFIS…QQELMAQQLA (233 aa)). Residues 383–445 (TSCVGSTMKV…SLNSLTGEIL (63 aa)) enclose the TRAM domain.

This sequence belongs to the methylthiotransferase family. MiaB subfamily. Monomer. Requires [4Fe-4S] cluster as cofactor.

It localises to the cytoplasm. It catalyses the reaction N(6)-dimethylallyladenosine(37) in tRNA + (sulfur carrier)-SH + AH2 + 2 S-adenosyl-L-methionine = 2-methylsulfanyl-N(6)-dimethylallyladenosine(37) in tRNA + (sulfur carrier)-H + 5'-deoxyadenosine + L-methionine + A + S-adenosyl-L-homocysteine + 2 H(+). Functionally, catalyzes the methylthiolation of N6-(dimethylallyl)adenosine (i(6)A), leading to the formation of 2-methylthio-N6-(dimethylallyl)adenosine (ms(2)i(6)A) at position 37 in tRNAs that read codons beginning with uridine. The chain is tRNA-2-methylthio-N(6)-dimethylallyladenosine synthase from Rickettsia conorii (strain ATCC VR-613 / Malish 7).